A 170-amino-acid polypeptide reads, in one-letter code: uncharacterized protein (170 aa).

This is an uncharacterized protein from Aquifex aeolicus (strain VF5).